The chain runs to 254 residues: 5-oxoprolinase subunit A (254 aa).

Belongs to the LamB/PxpA family. Forms a complex composed of PxpA, PxpB and PxpC.

It carries out the reaction 5-oxo-L-proline + ATP + 2 H2O = L-glutamate + ADP + phosphate + H(+). In terms of biological role, catalyzes the cleavage of 5-oxoproline to form L-glutamate coupled to the hydrolysis of ATP to ADP and inorganic phosphate. The chain is 5-oxoprolinase subunit A from Bacillus mycoides (strain KBAB4) (Bacillus weihenstephanensis).